The sequence spans 107 residues: MNTTDSSLLADIREVNLSYLLLAQRMLRQDHAASMFRLGFSTEVADILMRLSPAQLVKLASSSSVLCRFRFDDYGLLSALTQDVLGGALQQAHATILLAKQPVEEIA.

Belongs to the FlhD family. As to quaternary structure, homodimer; disulfide-linked. Forms a heterohexamer composed of two FlhC and four FlhD subunits. Each FlhC binds a FlhD dimer, forming a heterotrimer, and a hexamer assembles by dimerization of two heterotrimers.

It is found in the cytoplasm. Its function is as follows. Functions in complex with FlhC as a master transcriptional regulator that regulates transcription of several flagellar and non-flagellar operons by binding to their promoter region. Activates expression of class 2 flagellar genes, including fliA, which is a flagellum-specific sigma factor that turns on the class 3 genes. Also regulates genes whose products function in a variety of physiological pathways. The chain is Flagellar transcriptional regulator FlhD from Bordetella avium (strain 197N).